The chain runs to 390 residues: Elongation factor Ts, mitochondrial (390 aa).

Belongs to the EF-Ts family.

The protein localises to the mitochondrion. Associates with the EF-Tu.GDP complex and induces the exchange of GDP to GTP. It remains bound to the aminoacyl-tRNA.EF-Tu.GTP complex up to the GTP hydrolysis stage on the ribosome. This is Elongation factor Ts, mitochondrial from Plasmodium vivax (strain Salvador I).